A 429-amino-acid chain; its full sequence is Probable proton-coupled zinc antiporter SLC30A4 (429 aa).

The Cytoplasmic segment spans residues 1 to 113 (MAGSGAWKRL…ILKQRKVKAR (113 aa)). The helical transmembrane segment at 114 to 134 (LTIAAVLYLLFMIGELVGGYI) threads the bilayer. At 135-143 (ANSLAIMTD) the chain is on the lumenal side. Residues 144–164 (ALHMLTDLSAIILTLLALWLS) traverse the membrane as a helical segment. Zn(2+) is bound by residues His-146 and Asp-150. At 165 to 178 (SKSPTKRFTFGFHR) the chain is on the cytoplasmic side. Residues 179–199 (LEVLSAMISVLLVYILMGFLL) traverse the membrane as a helical segment. Topologically, residues 200-216 (YEAVQRTIHMNYEINGD) are lumenal. Residues 217 to 237 (IMLITAAVGVAVNVIMGFLLN) traverse the membrane as a helical segment. Residues 238 to 274 (QSGHRHSHSHSLPSNSPTRGSGCERNHGQDSLAVRAA) are Cytoplasmic-facing. The interval 240-264 (GHRHSHSHSLPSNSPTRGSGCERNH) is zinc binding. The chain crosses the membrane as a helical span at residues 275–295 (FVHALGDLVQSVGVLIAAYII). Zn(2+) contacts are provided by His-277 and Asp-281. Topologically, residues 296–310 (RFKPEYKIADPICTY) are lumenal. The chain crosses the membrane as a helical span at residues 311-331 (VFSLLVAFTTFRIIWDTVVII). The Cytoplasmic segment spans residues 332–429 (LEGVPSHLNV…TCANCQSSSP (98 aa)).

It belongs to the cation diffusion facilitator (CDF) transporter (TC 2.A.4) family. SLC30A subfamily. In terms of assembly, homodimer; dityrosine-linked. Homodimerization could be specific of the human protein and enhances the zinc transport efficiency. Interacts with TMEM163. Homodimerization through dityrosine bonds is stimulated by oxidative stress.

It localises to the endosome membrane. The protein localises to the late endosome membrane. It is found in the lysosome membrane. It carries out the reaction Zn(2+)(in) + 2 H(+)(out) = Zn(2+)(out) + 2 H(+)(in). In terms of biological role, probable proton-coupled zinc ion antiporter mediating zinc import from cytoplasm potentially into the endocytic compartment. Controls zinc deposition in milk. The protein is Probable proton-coupled zinc antiporter SLC30A4 of Homo sapiens (Human).